We begin with the raw amino-acid sequence, 644 residues long: Biosynthetic arginine decarboxylase (644 aa).

An N6-(pyridoxal phosphate)lysine modification is found at lysine 105. Position 287 to 297 (287 to 297 (LDVGGGLGIDY)) interacts with substrate.

This sequence belongs to the Orn/Lys/Arg decarboxylase class-II family. SpeA subfamily. Mg(2+) is required as a cofactor. Requires pyridoxal 5'-phosphate as cofactor.

It catalyses the reaction L-arginine + H(+) = agmatine + CO2. Catalyzes the biosynthesis of agmatine from arginine. The sequence is that of Biosynthetic arginine decarboxylase from Parasynechococcus marenigrum (strain WH8102).